A 235-amino-acid chain; its full sequence is Peptidase E (235 aa).

Residues serine 122, aspartate 137, and histidine 159 each act as charge relay system in the active site.

Belongs to the peptidase S51 family.

It is found in the cytoplasm. The enzyme catalyses Dipeptidase E catalyzes the hydrolysis of dipeptides Asp-|-Xaa. It does not act on peptides with N-terminal Glu, Asn or Gln, nor does it cleave isoaspartyl peptides.. Its function is as follows. Hydrolyzes dipeptides containing N-terminal aspartate residues. May play a role in allowing the cell to use peptide aspartate to spare carbon otherwise required for the synthesis of the aspartate family of amino acids. This chain is Peptidase E, found in Shewanella amazonensis (strain ATCC BAA-1098 / SB2B).